A 546-amino-acid chain; its full sequence is Glucose-6-phosphate isomerase 1 (546 aa).

Glu-353 functions as the Proton donor in the catalytic mechanism. Active-site residues include His-384 and Lys-512.

The protein belongs to the GPI family.

It localises to the cytoplasm. The catalysed reaction is alpha-D-glucose 6-phosphate = beta-D-fructose 6-phosphate. It functions in the pathway carbohydrate biosynthesis; gluconeogenesis. Its pathway is carbohydrate degradation; glycolysis; D-glyceraldehyde 3-phosphate and glycerone phosphate from D-glucose: step 2/4. Catalyzes the reversible isomerization of glucose-6-phosphate to fructose-6-phosphate. The chain is Glucose-6-phosphate isomerase 1 from Colwellia psychrerythraea (strain 34H / ATCC BAA-681) (Vibrio psychroerythus).